The following is a 195-amino-acid chain: Phosphoheptose isomerase (195 aa).

Positions 36–195 constitute an SIS domain; that stretch reads LVDSLKGDGI…IIEKELFGLD (160 aa). 51-53 lines the substrate pocket; it reads NGG. Zn(2+) contacts are provided by His-60 and Glu-64. Substrate contacts are provided by residues Glu-64, 95-96, 121-123, Ser-126, and Gln-173; these read ND and TTS. Positions 173 and 181 each coordinate Zn(2+).

The protein belongs to the SIS family. GmhA subfamily. The cofactor is Zn(2+).

It is found in the cytoplasm. The catalysed reaction is 2 D-sedoheptulose 7-phosphate = D-glycero-alpha-D-manno-heptose 7-phosphate + D-glycero-beta-D-manno-heptose 7-phosphate. It participates in carbohydrate biosynthesis; D-glycero-D-manno-heptose 7-phosphate biosynthesis; D-glycero-alpha-D-manno-heptose 7-phosphate and D-glycero-beta-D-manno-heptose 7-phosphate from sedoheptulose 7-phosphate: step 1/1. Its function is as follows. Catalyzes the isomerization of sedoheptulose 7-phosphate in D-glycero-D-manno-heptose 7-phosphate. This Leptospira biflexa serovar Patoc (strain Patoc 1 / Ames) protein is Phosphoheptose isomerase.